The primary structure comprises 295 residues: NAD kinase (295 aa).

Catalysis depends on Asp73, which acts as the Proton acceptor. NAD(+) contacts are provided by residues Asp73–Gly74, Arg78, Asn146–Glu147, Lys157, Arg174, Asp176, and Thr187–Ser192.

It belongs to the NAD kinase family. A divalent metal cation serves as cofactor.

It is found in the cytoplasm. It carries out the reaction NAD(+) + ATP = ADP + NADP(+) + H(+). Its function is as follows. Involved in the regulation of the intracellular balance of NAD and NADP, and is a key enzyme in the biosynthesis of NADP. Catalyzes specifically the phosphorylation on 2'-hydroxyl of the adenosine moiety of NAD to yield NADP. The chain is NAD kinase from Wigglesworthia glossinidia brevipalpis.